A 415-amino-acid polypeptide reads, in one-letter code: Phosphoribosylamine--glycine ligase (415 aa).

The ATP-grasp domain maps to 108-311 (KKIMEKYNIP…LMQHIIDLDE (204 aa)). 134 to 191 (IENCELPVVVKKDGLAAGKGVIIADTIEAARSAIEIMYGDEEEGTVVFETFLEGEEFS) contacts ATP. Residues E281 and N283 each coordinate Mg(2+).

It belongs to the GARS family. Mg(2+) serves as cofactor. Requires Mn(2+) as cofactor.

The catalysed reaction is 5-phospho-beta-D-ribosylamine + glycine + ATP = N(1)-(5-phospho-beta-D-ribosyl)glycinamide + ADP + phosphate + H(+). It participates in purine metabolism; IMP biosynthesis via de novo pathway; N(1)-(5-phospho-D-ribosyl)glycinamide from 5-phospho-alpha-D-ribose 1-diphosphate: step 2/2. In Staphylococcus aureus (strain MW2), this protein is Phosphoribosylamine--glycine ligase.